Consider the following 811-residue polypeptide: Protein kinase C-binding protein NELL2a (811 aa).

Positions 1–18 (MAFLQLFVGLLCGAAVSA) are cleaved as a signal peptide. In terms of domain architecture, Laminin G-like spans 54–225 (AFMFQGSSRS…TQCPDLNRTC (172 aa)). Residues Asn-222, Asn-290, and Asn-295 are each glycosylated (N-linked (GlcNAc...) asparagine). The 60-residue stretch at 269-328 (RTCRVKDQIYREEQSWTDGCKNCTCSNGTVRCEKILCPPLDCPDGTTPAYVTGTCCKECQ) folds into the VWFC 1 domain. The EGF-like 1 domain maps to 395–437 (GHDFCAEENICSENSDCVNLDAGASCGCKNGFRPLRLDSAYCE). Disulfide bonds link Cys-399-Cys-411, Cys-405-Cys-420, and Cys-422-Cys-436. Residues Asp-438, Ile-439, and Glu-441 each coordinate Ca(2+). The EGF-like 2; calcium-binding domain maps to 438–479 (DIDECAEGRHYCRENTECVNTAGSFMCVCHTGFIRIDDYSCT). Cystine bridges form between Cys-442/Cys-455, Cys-449/Cys-464, Cys-466/Cys-478, Cys-484/Cys-497, Cys-491/Cys-506, Cys-508/Cys-519, Cys-523/Cys-533, Cys-527/Cys-539, and Cys-541/Cys-550. Ca(2+) is bound by residues Asn-457, Thr-458, and Ser-461. The region spanning 480-520 (EHDECASGQHDCDENALCFNTVGGHSCSCKPGYSGNGTVCR) is the EGF-like 3; calcium-binding domain. N-linked (GlcNAc...) asparagine glycosylation is present at Asn-515. An EGF-like 4 domain is found at 521–551 (ALCDGRCLNGGSCASPNVCVCVQGFSGQNCE). Positions 553, 554, and 556 each coordinate Ca(2+). Residues 553-592 (DIDECSEGLVQCAAHATCVNLPGWYHCECRDGYHDNEVFS) form the EGF-like 5; calcium-binding domain. 3 disulfides stabilise this stretch: Cys-557–Cys-570, Cys-564–Cys-579, and Cys-581–Cys-598. Residues Asn-572, Leu-573, and Trp-576 each contribute to the Ca(2+) site. 3 residues coordinate Ca(2+): Asp-600, Ile-601, and Glu-603. One can recognise an EGF-like 6; calcium-binding domain in the interval 600-635 (DIDECRTGRSTCANDTVCFNLDGGFDCRCPHGHNCS). 3 cysteine pairs are disulfide-bonded: Cys-604-Cys-617, Cys-611-Cys-626, and Cys-628-Cys-634. N-linked (GlcNAc...) asparagine glycosylation is present at Asn-613. Ca(2+) is bound by residues Asn-619, Leu-620, and Gly-623. N-linked (GlcNAc...) asparagine glycosylation is present at Asn-633. VWFC domains lie at 636–691 (GDCI…PECD) and 696–754 (SQCL…PRCV).

In terms of assembly, homotrimer.

It localises to the secreted. May regulate neuronal differentiation, polarization and axon guidance. This Danio rerio (Zebrafish) protein is Protein kinase C-binding protein NELL2a (nell2a).